A 388-amino-acid polypeptide reads, in one-letter code: Chalcone synthase LF3 (388 aa).

Residue Cys-164 is part of the active site.

The protein belongs to the thiolase-like superfamily. Chalcone/stilbene synthases family.

It carries out the reaction (E)-4-coumaroyl-CoA + 3 malonyl-CoA + 3 H(+) = 2',4,4',6'-tetrahydroxychalcone + 3 CO2 + 4 CoA. It functions in the pathway secondary metabolite biosynthesis; flavonoid biosynthesis. Functionally, the primary product of this enzyme is 4,2',4',6'-tetrahydroxychalcone (also termed naringenin-chalcone or chalcone) which can under specific conditions spontaneously isomerize into naringenin. The protein is Chalcone synthase LF3 (CHS-LF3) of Ipomoea batatas (Sweet potato).